Consider the following 175-residue polypeptide: Nucleoside-triphosphatase THEP1 (175 aa).

ATP contacts are provided by residues 16 to 23 (GMPGVGKT) and 103 to 110 (VAFIDEIG).

This sequence belongs to the THEP1 NTPase family.

It carries out the reaction a ribonucleoside 5'-triphosphate + H2O = a ribonucleoside 5'-diphosphate + phosphate + H(+). Its function is as follows. Has nucleotide phosphatase activity towards ATP, GTP, CTP, TTP and UTP. May hydrolyze nucleoside diphosphates with lower efficiency. This Pyrobaculum calidifontis (strain DSM 21063 / JCM 11548 / VA1) protein is Nucleoside-triphosphatase THEP1.